Here is a 223-residue protein sequence, read N- to C-terminus: Ribosomal RNA small subunit methyltransferase G (223 aa).

S-adenosyl-L-methionine contacts are provided by residues Gly-82, Leu-87, 133–134 (AE), and Arg-151.

The protein belongs to the methyltransferase superfamily. RNA methyltransferase RsmG family.

It localises to the cytoplasm. In terms of biological role, specifically methylates the N7 position of guanine in position 518 of 16S rRNA. The chain is Ribosomal RNA small subunit methyltransferase G from Corynebacterium glutamicum (strain ATCC 13032 / DSM 20300 / JCM 1318 / BCRC 11384 / CCUG 27702 / LMG 3730 / NBRC 12168 / NCIMB 10025 / NRRL B-2784 / 534).